The sequence spans 308 residues: ADP-L-glycero-D-manno-heptose-6-epimerase (308 aa).

Residues 10–11 (FI), 31–32 (DN), K38, K53, 75–79 (EGACS), and N92 each bind NADP(+). Y139 serves as the catalytic Proton acceptor. K143 lines the NADP(+) pocket. N168 is a binding site for substrate. Residues V169 and K177 each coordinate NADP(+). K177 acts as the Proton acceptor in catalysis. Residues S179, H186, 200 to 203 (FAGS), R208, and Y271 each bind substrate.

Belongs to the NAD(P)-dependent epimerase/dehydratase family. HldD subfamily. As to quaternary structure, homopentamer. It depends on NADP(+) as a cofactor.

The enzyme catalyses ADP-D-glycero-beta-D-manno-heptose = ADP-L-glycero-beta-D-manno-heptose. It participates in nucleotide-sugar biosynthesis; ADP-L-glycero-beta-D-manno-heptose biosynthesis; ADP-L-glycero-beta-D-manno-heptose from D-glycero-beta-D-manno-heptose 7-phosphate: step 4/4. Functionally, catalyzes the interconversion between ADP-D-glycero-beta-D-manno-heptose and ADP-L-glycero-beta-D-manno-heptose via an epimerization at carbon 6 of the heptose. The protein is ADP-L-glycero-D-manno-heptose-6-epimerase of Haemophilus influenzae (strain PittGG).